A 183-amino-acid polypeptide reads, in one-letter code: Photosystem I assembly protein Ycf4 (183 aa).

The next 2 membrane-spanning stretches (helical) occupy residues 21 to 43 (YWWA…SSRL) and 58 to 80 (FIPQ…TYLW).

This sequence belongs to the Ycf4 family.

The protein localises to the plastid. It is found in the chloroplast thylakoid membrane. Its function is as follows. Seems to be required for the assembly of the photosystem I complex. This chain is Photosystem I assembly protein Ycf4, found in Nephroselmis olivacea (Green alga).